A 393-amino-acid polypeptide reads, in one-letter code: Formate-dependent phosphoribosylglycinamide formyltransferase (393 aa).

Residues 22-23 (EL) and Glu82 contribute to the N(1)-(5-phospho-beta-D-ribosyl)glycinamide site. ATP contacts are provided by residues Arg114, Lys155, 160 to 165 (SSGKGQ), 195 to 198 (EGFI), and Glu203. The ATP-grasp domain maps to 119 to 308 (RLAAEELDLP…QFALHARAIL (190 aa)). Residues Glu267 and Glu279 each contribute to the Mg(2+) site. Residues Asp286, Lys356, and 363-364 (RR) contribute to the N(1)-(5-phospho-beta-D-ribosyl)glycinamide site.

The protein belongs to the PurK/PurT family. Homodimer.

It carries out the reaction N(1)-(5-phospho-beta-D-ribosyl)glycinamide + formate + ATP = N(2)-formyl-N(1)-(5-phospho-beta-D-ribosyl)glycinamide + ADP + phosphate + H(+). The protein operates within purine metabolism; IMP biosynthesis via de novo pathway; N(2)-formyl-N(1)-(5-phospho-D-ribosyl)glycinamide from N(1)-(5-phospho-D-ribosyl)glycinamide (formate route): step 1/1. Functionally, involved in the de novo purine biosynthesis. Catalyzes the transfer of formate to 5-phospho-ribosyl-glycinamide (GAR), producing 5-phospho-ribosyl-N-formylglycinamide (FGAR). Formate is provided by PurU via hydrolysis of 10-formyl-tetrahydrofolate. This is Formate-dependent phosphoribosylglycinamide formyltransferase from Pseudomonas putida (strain ATCC 47054 / DSM 6125 / CFBP 8728 / NCIMB 11950 / KT2440).